The primary structure comprises 496 residues: Glycerol kinase (496 aa).

Residue threonine 12 participates in ADP binding. Residues threonine 12, threonine 13, and serine 14 each contribute to the ATP site. Threonine 12 serves as a coordination point for sn-glycerol 3-phosphate. An ADP-binding site is contributed by arginine 16. 3 residues coordinate sn-glycerol 3-phosphate: arginine 82, glutamate 83, and tyrosine 134. Positions 82, 83, and 134 each coordinate glycerol. Histidine 230 bears the Phosphohistidine; by HPr mark. A sn-glycerol 3-phosphate-binding site is contributed by aspartate 244. Glycerol-binding residues include aspartate 244 and glutamine 245. Residues threonine 266 and glycine 309 each coordinate ADP. 4 residues coordinate ATP: threonine 266, glycine 309, glutamine 313, and glycine 410. ADP contacts are provided by glycine 410 and asparagine 414.

Belongs to the FGGY kinase family. As to quaternary structure, homotetramer and homodimer (in equilibrium). The phosphoenolpyruvate-dependent sugar phosphotransferase system (PTS), including enzyme I, and histidine-containing protein (HPr) are required for the phosphorylation, which leads to the activation of the enzyme.

It catalyses the reaction glycerol + ATP = sn-glycerol 3-phosphate + ADP + H(+). Its pathway is polyol metabolism; glycerol degradation via glycerol kinase pathway; sn-glycerol 3-phosphate from glycerol: step 1/1. With respect to regulation, activated by phosphorylation and inhibited by fructose 1,6-bisphosphate (FBP). Functionally, key enzyme in the regulation of glycerol uptake and metabolism. Catalyzes the phosphorylation of glycerol to yield sn-glycerol 3-phosphate. The protein is Glycerol kinase of Bacillus anthracis (strain A0248).